Here is a 334-residue protein sequence, read N- to C-terminus: tRNA uridine(34) hydroxylase (334 aa).

Positions 123–217 constitute a Rhodanese domain; the sequence is SDPDVILVDT…YLEEVKAEES (95 aa). Cys177 serves as the catalytic Cysteine persulfide intermediate.

It belongs to the TrhO family.

It carries out the reaction uridine(34) in tRNA + AH2 + O2 = 5-hydroxyuridine(34) in tRNA + A + H2O. Its function is as follows. Catalyzes oxygen-dependent 5-hydroxyuridine (ho5U) modification at position 34 in tRNAs. In Shewanella baltica (strain OS223), this protein is tRNA uridine(34) hydroxylase.